The following is a 196-amino-acid chain: Shikimate kinase (196 aa).

32-37 (GAGKSA) contributes to the ATP binding site. Position 36 (Ser-36) interacts with Mg(2+). The substrate site is built by Asp-54, Arg-78, and Gly-100. Arg-138 is an ATP binding site. Arg-157 serves as a coordination point for substrate. Residue Arg-174 coordinates ATP.

The protein belongs to the shikimate kinase family. In terms of assembly, monomer. Mg(2+) serves as cofactor.

Its subcellular location is the cytoplasm. It carries out the reaction shikimate + ATP = 3-phosphoshikimate + ADP + H(+). It participates in metabolic intermediate biosynthesis; chorismate biosynthesis; chorismate from D-erythrose 4-phosphate and phosphoenolpyruvate: step 5/7. Catalyzes the specific phosphorylation of the 3-hydroxyl group of shikimic acid using ATP as a cosubstrate. This chain is Shikimate kinase, found in Rhizobium leguminosarum bv. trifolii (strain WSM2304).